Consider the following 299-residue polypeptide: HTH-type transcriptional regulator CrgA (299 aa).

The 60-residue stretch at 1-60 (MKTNSEELTVFVQVVESGSFSRAAEQLAMANSAVSRIVKRLEEKLGVNLLNRTTRQLSLT) folds into the HTH lysR-type domain. The segment at residues 20-39 (FSRAAEQLAMANSAVSRIVK) is a DNA-binding region (H-T-H motif).

It belongs to the LysR transcriptional regulatory family. In terms of assembly, forms oligomers. Forms an octomeric ring-like structure in solution. May form hexadecamers when bound to target DNA.

With respect to regulation, activation and repression activities are enhanced by the addition of alpha-methylene-gamma-butyrolactone (MBL), an inducer of NADPH:quinone oxidoreductase. Functionally, regulatory protein that activates transcription of mdaB, encoding a NADPH:quinone oxidoreductase, and represses its own transcription. Under the same experimental conditions, no regulation of transcription of pilus and capsule genes is detected. The sequence is that of HTH-type transcriptional regulator CrgA from Neisseria meningitidis serogroup B (strain ATCC BAA-335 / MC58).